Here is a 604-residue protein sequence, read N- to C-terminus: MVKHSFIALAEHASKLRRSIPPVKLTYKNMLRDPSVKYRAFAPPKMVKRIWPDKTIQKAPRWLSTDLRDGNQSLPDPMSVAQKKEYFHKLINIGFKEIEVSFPSASQTDFDFTRYAVENAPDDVGIQCLVQSREHLIKRTVEALTGAKRATIHTYLATSDMFREIVFNMSREEAISKAVEATKLVRKLTKDDPSQQATRWSYEFSPECFSDTPGEFAVEICEAVKKAWEPTEENPIIFNLPATVEVASPNVYADQIEYFSTHITEREKVCISTHCHNDRGCGVAATELGMLAGADRVEGCLFGNGERTGNVDLVTVAMNMYTQGVSPNLDFSDLTSISEIVHRCNKIPIPPRAPYGGELVVSAFSGSHQDAIKKGFAIQNKKQAQGETRWRIPYLPLDPKDIGRDYEAVIRVNSQSGKGGAAWVIMRSLGLDVPRPMQVDFSNTLQKNADALGRELKSEEITKLFKETYNYNNNEHIYVTLLNYEVKKLNPERRALVGQVEINDKVVNIEGYGNGPISSLVDALSNLLNVKLSVQNYSEHSLGSGSATQAASFINLSYIKDINNHATSNMWGVGVSEDTGDASIKAVFATVNNIIHSGDVLLAE.

Residues 1–50 (MVKHSFIALAEHASKLRRSIPPVKLTYKNMLRDPSVKYRAFAPPKMVKRI) constitute a mitochondrion transit peptide. The region spanning 60–335 (PRWLSTDLRD…SPNLDFSDLT (276 aa)) is the Pyruvate carboxyltransferase domain. A divalent metal cation is bound by residues Asp69, His274, His276, and Asn310.

This sequence belongs to the alpha-IPM synthase/homocitrate synthase family. LeuA type 2 subfamily. In terms of assembly, homodimer. It depends on a divalent metal cation as a cofactor.

Its subcellular location is the mitochondrion. The catalysed reaction is 3-methyl-2-oxobutanoate + acetyl-CoA + H2O = (2S)-2-isopropylmalate + CoA + H(+). It functions in the pathway amino-acid biosynthesis; L-leucine biosynthesis; L-leucine from 3-methyl-2-oxobutanoate: step 1/4. Functionally, catalyzes the condensation of the acetyl group of acetyl-CoA with 3-methyl-2-oxobutanoate (2-oxoisovalerate) to form 3-carboxy-3-hydroxy-4-methylpentanoate (2-isopropylmalate). Redundant to LEU4, responsible for about 20% of alpha-IPMS activity. Involved in leucine synthesis. This chain is 2-isopropylmalate synthase 2, mitochondrial, found in Saccharomyces cerevisiae (strain ATCC 204508 / S288c) (Baker's yeast).